A 497-amino-acid polypeptide reads, in one-letter code: ATP-dependent RNA helicase CshA (497 aa).

The Q motif motif lies at 1-29; that stretch reads MKFSELGLSDSLLKAIKRSGYEEATPIQE. Positions 32-202 constitute a Helicase ATP-binding domain; the sequence is IPMVLEGKDV…VQFMSDPETV (171 aa). 45–52 provides a ligand contact to ATP; it reads AQTGTGKT. The DEAD box signature appears at 150-153; it reads DEAD. One can recognise a Helicase C-terminal domain in the interval 228 to 373; sequence DIMTRLIDVQ…PLKPPTAEEA (146 aa). The tract at residues 425–497 is disordered; that stretch reads AASEVPVKIT…SFNIRHRKEN (73 aa). The span at 448–458 shows a compositional bias: low complexity; the sequence is RNGNRNNSHGG. Composition is skewed to basic residues over residues 459 to 473 and 481 to 497; these read NHYR…QHGS and KSHS…RKEN.

It belongs to the DEAD box helicase family. CshA subfamily. Oligomerizes, may be a member of the RNA degradosome.

The protein localises to the cytoplasm. Its subcellular location is the cell membrane. The catalysed reaction is ATP + H2O = ADP + phosphate + H(+). Its function is as follows. DEAD-box RNA helicase possibly involved in RNA degradation. Unwinds dsRNA in both 5'- and 3'-directions, has RNA-dependent ATPase activity. Over-expression leads to cell aggregation. The sequence is that of ATP-dependent RNA helicase CshA from Limosilactobacillus reuteri (Lactobacillus reuteri).